The primary structure comprises 320 residues: Citrate synthase (320 aa).

Residues histidine 249 and aspartate 307 contribute to the active site.

This sequence belongs to the citrate synthase family.

It catalyses the reaction oxaloacetate + acetyl-CoA + H2O = citrate + CoA + H(+). The protein operates within carbohydrate metabolism; tricarboxylic acid cycle; isocitrate from oxaloacetate: step 1/2. This chain is Citrate synthase (gltA), found in Bartonella doshiae.